The primary structure comprises 121 residues: Small ribosomal subunit protein uS13 (121 aa).

Positions 94–121 are disordered; it reads GLPLRGQRTRTNARTRKGPRRAAQSLKK.

The protein belongs to the universal ribosomal protein uS13 family. As to quaternary structure, part of the 30S ribosomal subunit. Forms a loose heterodimer with protein S19. Forms two bridges to the 50S subunit in the 70S ribosome.

Functionally, located at the top of the head of the 30S subunit, it contacts several helices of the 16S rRNA. In the 70S ribosome it contacts the 23S rRNA (bridge B1a) and protein L5 of the 50S subunit (bridge B1b), connecting the 2 subunits; these bridges are implicated in subunit movement. Contacts the tRNAs in the A and P-sites. The sequence is that of Small ribosomal subunit protein uS13 from Paraburkholderia phymatum (strain DSM 17167 / CIP 108236 / LMG 21445 / STM815) (Burkholderia phymatum).